Consider the following 224-residue polypeptide: ATP-dependent dethiobiotin synthetase BioD (224 aa).

Position 12-17 (12-17 (GVGKTF)) interacts with ATP. Residue Thr16 participates in Mg(2+) binding. The active site involves Lys37. Residue Thr41 coordinates substrate. Residue Glu107 coordinates Mg(2+). ATP-binding positions include 107–110 (EGAG), 167–168 (GS), 197–199 (PEG), and Glu204.

It belongs to the dethiobiotin synthetase family. As to quaternary structure, homodimer. Requires Mg(2+) as cofactor.

It localises to the cytoplasm. The catalysed reaction is (7R,8S)-7,8-diammoniononanoate + CO2 + ATP = (4R,5S)-dethiobiotin + ADP + phosphate + 3 H(+). It functions in the pathway cofactor biosynthesis; biotin biosynthesis; biotin from 7,8-diaminononanoate: step 1/2. Its function is as follows. Catalyzes a mechanistically unusual reaction, the ATP-dependent insertion of CO2 between the N7 and N8 nitrogen atoms of 7,8-diaminopelargonic acid (DAPA, also called 7,8-diammoniononanoate) to form a ureido ring. The chain is ATP-dependent dethiobiotin synthetase BioD from Corynebacterium glutamicum (strain R).